We begin with the raw amino-acid sequence, 240 residues long: Thyroid transcription factor 1-associated protein 26 (240 aa).

A disordered region spans residues 104–181; that stretch reads LRKQQRKAGL…QEEYERVQAK (78 aa). A compositionally biased stretch (low complexity) spans 131–149; that stretch reads TEQTSSEEPPGGHQPQPEE. Residues 171–181 are compositionally biased toward basic and acidic residues; that stretch reads AQEEYERVQAK.

The protein belongs to the TAP26 family. In terms of assembly, interacts with NKX2-1.

It localises to the nucleus. In terms of biological role, component of the transcription complexes of the pulmonary surfactant-associated protein-B (SFTPB) and -C (SFTPC). Enhances homeobox protein Nkx-2.1-activated SFTPB and SFTPC promoter activities. This is Thyroid transcription factor 1-associated protein 26 (Ccdc59) from Mus musculus (Mouse).